We begin with the raw amino-acid sequence, 220 residues long: Uracil phosphoribosyltransferase 2 (220 aa).

Residue 77-80 (ARDI) participates in GTP binding. Positions 87 and 113 each coordinate 5-phospho-alpha-D-ribose 1-diphosphate. Arg-134 is a binding site for GTP. Residues Asp-140 and 140-148 (DPLLATGNS) contribute to the 5-phospho-alpha-D-ribose 1-diphosphate site. A D-ribose 5-phosphate-binding site is contributed by Tyr-204. Uracil-binding positions include Val-205 and 210–212 (GDF). Asp-211 is a 5-phospho-alpha-D-ribose 1-diphosphate binding site.

Belongs to the UPRTase family. The cofactor is Mg(2+).

The enzyme catalyses UMP + diphosphate = 5-phospho-alpha-D-ribose 1-diphosphate + uracil. The protein operates within pyrimidine metabolism; UMP biosynthesis via salvage pathway; UMP from uracil: step 1/1. Allosterically activated by GTP. In terms of biological role, catalyzes the conversion of uracil and 5-phospho-alpha-D-ribose 1-diphosphate (PRPP) to UMP and diphosphate. The chain is Uracil phosphoribosyltransferase 2 from Schizosaccharomyces pombe (strain 972 / ATCC 24843) (Fission yeast).